Consider the following 207-residue polypeptide: Guanylate kinase (207 aa).

A Guanylate kinase-like domain is found at 6–185; the sequence is GLLIVLSGPS…AKNRIQSIVE (180 aa). An ATP-binding site is contributed by 13 to 20; sequence GPSGVGKG.

This sequence belongs to the guanylate kinase family.

It localises to the cytoplasm. It carries out the reaction GMP + ATP = GDP + ADP. Essential for recycling GMP and indirectly, cGMP. The chain is Guanylate kinase from Staphylococcus epidermidis (strain ATCC 35984 / DSM 28319 / BCRC 17069 / CCUG 31568 / BM 3577 / RP62A).